Reading from the N-terminus, the 203-residue chain is Outer-membrane lipoprotein LolB (203 aa).

Positions 1–17 (MNRLFRLLPLASLVLTA) are cleaved as a signal peptide. Cys18 carries N-palmitoyl cysteine lipidation. Cys18 is lipidated: S-diacylglycerol cysteine.

This sequence belongs to the LolB family. Monomer.

It localises to the cell outer membrane. Plays a critical role in the incorporation of lipoproteins in the outer membrane after they are released by the LolA protein. The chain is Outer-membrane lipoprotein LolB from Klebsiella pneumoniae (strain 342).